A 286-amino-acid chain; its full sequence is MSKLLTNTALSTFRSTRFAARQLSRNFGGIASTAQPVNLKAGYGLDYKKGLLQTQQRQIQLSGARNMFIQTQDTPNPESLKFLPGVEVLGKGNTHDFPSGTTAHGSPLAKLLFRVEGVRAVFFGADFITISKEEGAEWSLIKPEVFAVIMDFFASGLPILHESTPNADTEILEDDDETVMMIKELLDTRIRPTVQEDGGDIVFMGYENGIVKLKMQGSCSSCPSSIVTLKNGVQNMLQFYIPEVESVEQVFDAVDKMADSEFERFERNLKALKEKDSAAPAGGGTN.

The N-terminal 66 residues, 1–66 (MSKLLTNTAL…RQIQLSGARN (66 aa)), are a transit peptide targeting the mitochondrion. Residues 182-250 (IKELLDTRIR…IPEVESVEQV (69 aa)) are nifU. Residues C219 and C222 each coordinate [4Fe-4S] cluster.

The protein belongs to the NifU family.

The protein localises to the mitochondrion. In terms of biological role, molecular scaffold for [Fe-S] cluster assembly of mitochondrial iron-sulfur proteins. The chain is NFU1 iron-sulfur cluster scaffold homolog, mitochondrial from Drosophila ananassae (Fruit fly).